The sequence spans 298 residues: Proline iminopeptidase (298 aa).

An AB hydrolase-1 domain is found at 26 to 277; that stretch reads VLLLHGGPAM…NGSHLAMWDD (252 aa). S103 serves as the catalytic Nucleophile. D244 is a catalytic residue. H271 functions as the Proton donor in the catalytic mechanism.

This sequence belongs to the peptidase S33 family. Monomer.

It carries out the reaction Release of N-terminal proline from a peptide.. Releases the N-terminal proline from various substrates. Cleaves specifically Pro-betaNA and small peptides containing proline at the amino terminal. No activity against hydroxyproline-betaNA. The chain is Proline iminopeptidase (fpaP) from Elizabethkingia meningoseptica (Chryseobacterium meningosepticum).